Here is a 299-residue protein sequence, read N- to C-terminus: Non-homologous end joining protein Ku (299 aa).

Residues 10–188 (ISFGLVHIPV…TEAVTDARLT (179 aa)) form the Ku domain. Disordered regions lie at residues 227–249 (AGEG…SADV) and 261–299 (AGKS…GKAS). Residues 273–283 (AAKDKVADKQS) are compositionally biased toward basic and acidic residues. Residues 284-299 (PKPKRPAVRKKTGKAS) show a composition bias toward basic residues.

This sequence belongs to the prokaryotic Ku family. In terms of assembly, homodimer. Interacts with LigD.

With LigD forms a non-homologous end joining (NHEJ) DNA repair enzyme, which repairs dsDNA breaks with reduced fidelity. Binds linear dsDNA with 5'- and 3'- overhangs but not closed circular dsDNA nor ssDNA. Recruits and stimulates the ligase activity of LigD. This is Non-homologous end joining protein Ku from Pseudomonas syringae pv. tomato (strain ATCC BAA-871 / DC3000).